Reading from the N-terminus, the 327-residue chain is Aromatase (327 aa).

Residue Cys315 coordinates heme.

The protein belongs to the cytochrome P450 family. It depends on heme as a cofactor.

The protein localises to the membrane. The catalysed reaction is testosterone + 3 reduced [NADPH--hemoprotein reductase] + 3 O2 = 17beta-estradiol + formate + 3 oxidized [NADPH--hemoprotein reductase] + 4 H2O + 4 H(+). The enzyme catalyses androst-4-ene-3,17-dione + 3 reduced [NADPH--hemoprotein reductase] + 3 O2 = estrone + formate + 3 oxidized [NADPH--hemoprotein reductase] + 4 H2O + 4 H(+). In terms of biological role, catalyzes the formation of aromatic C18 estrogens from C19 androgens. In Coturnix japonica (Japanese quail), this protein is Aromatase (CYP19A1).